Consider the following 156-residue polypeptide: Small ribosomal subunit protein uS7cz/uS7cy (156 aa).

This sequence belongs to the universal ribosomal protein uS7 family. In terms of assembly, part of the 30S ribosomal subunit.

The protein resides in the plastid. The protein localises to the chloroplast. Functionally, one of the primary rRNA binding proteins, it binds directly to 16S rRNA where it nucleates assembly of the head domain of the 30S subunit. The polypeptide is Small ribosomal subunit protein uS7cz/uS7cy (rps7-A) (Saccharum hybrid (Sugarcane)).